The sequence spans 132 residues: Interleukin-5 (132 aa).

Positions 1–17 (MRLPLQLSILTLAWVWA) are cleaved as a signal peptide. Asn45, Asn74, and Asn88 each carry an N-linked (GlcNAc...) asparagine glycan.

Belongs to the IL-5 family. As to quaternary structure, homodimer; disulfide-linked. Interacts with IL5RA. Interacts with CSF2RB.

The protein localises to the secreted. Functionally, homodimeric cytokine expressed predominantly by T-lymphocytes and NK cells that plays an important role in the survival, differentiation, and chemotaxis of eosinophils. Also acts on activated and resting B-cells to induce immunoglobulin production, growth, and differentiation. Mechanistically, exerts its biological effects through a receptor composed of IL5RA subunit and the cytokine receptor common subunit beta/CSF2RB. Binding to the receptor leads to activation of various kinases including LYN, SYK and JAK2 and thereby propagates signals through the RAS-MAPK and JAK-STAT5 pathways respectively. The polypeptide is Interleukin-5 (IL5) (Meriones unguiculatus (Mongolian jird)).